A 211-amino-acid polypeptide reads, in one-letter code: WUSCHEL-related homeobox 14 (211 aa).

A DNA-binding region (homeobox; WUS-type) is located at residues 91-155 (STRHRWTPTS…NRRARSKRKQ (65 aa)). A disordered region spans residues 147-183 (RRARSKRKQPQTTTANGQADDVAVTTEERRSCGDSGG).

This sequence belongs to the WUS homeobox family. Expressed in root vasculature, pericycle and stamen. Expressed in the procambium during stem maturation.

The protein resides in the nucleus. Functionally, acts redundantly with WOX4 downstream of the TDR/PXY receptor kinase to regulate procambial cell proliferation and differentiation in vascular tissue, independently of any role in vascular. Involved in the regulation of gibberellin (GA) biosynthesis pathway. Positively regulates the expression of the GA biosynthesis gene GA3OX1, and negatively regulates the expression of GA2OX1 during secondary growth, which increases bioactive GA content in the inflorescence stem. Promotes vascular cell differentiation in the inflorescence stem. In terms of biological role, transcription factor which may be involved in developmental processes. The sequence is that of WUSCHEL-related homeobox 14 (WOX14) from Arabidopsis thaliana (Mouse-ear cress).